The primary structure comprises 156 residues: 6,7-dimethyl-8-ribityllumazine synthase (156 aa).

5-amino-6-(D-ribitylamino)uracil-binding positions include Phe25, 59-61 (AFE), and 83-85 (AVI). 88–89 (GT) provides a ligand contact to (2S)-2-hydroxy-3-oxobutyl phosphate. His91 serves as the catalytic Proton donor. Phe116 contacts 5-amino-6-(D-ribitylamino)uracil. Arg130 lines the (2S)-2-hydroxy-3-oxobutyl phosphate pocket.

It belongs to the DMRL synthase family.

It carries out the reaction (2S)-2-hydroxy-3-oxobutyl phosphate + 5-amino-6-(D-ribitylamino)uracil = 6,7-dimethyl-8-(1-D-ribityl)lumazine + phosphate + 2 H2O + H(+). It functions in the pathway cofactor biosynthesis; riboflavin biosynthesis; riboflavin from 2-hydroxy-3-oxobutyl phosphate and 5-amino-6-(D-ribitylamino)uracil: step 1/2. Catalyzes the formation of 6,7-dimethyl-8-ribityllumazine by condensation of 5-amino-6-(D-ribitylamino)uracil with 3,4-dihydroxy-2-butanone 4-phosphate. This is the penultimate step in the biosynthesis of riboflavin. The protein is 6,7-dimethyl-8-ribityllumazine synthase of Desulfovibrio desulfuricans (strain ATCC 27774 / DSM 6949 / MB).